Consider the following 292-residue polypeptide: Ribosomal protein L11 methyltransferase (292 aa).

Positions 143, 164, 186, and 228 each coordinate S-adenosyl-L-methionine.

The protein belongs to the methyltransferase superfamily. PrmA family.

It localises to the cytoplasm. The enzyme catalyses L-lysyl-[protein] + 3 S-adenosyl-L-methionine = N(6),N(6),N(6)-trimethyl-L-lysyl-[protein] + 3 S-adenosyl-L-homocysteine + 3 H(+). Its function is as follows. Methylates ribosomal protein L11. The chain is Ribosomal protein L11 methyltransferase from Aeromonas hydrophila subsp. hydrophila (strain ATCC 7966 / DSM 30187 / BCRC 13018 / CCUG 14551 / JCM 1027 / KCTC 2358 / NCIMB 9240 / NCTC 8049).